We begin with the raw amino-acid sequence, 461 residues long: PTS system sucrose-specific EIIBC component (461 aa).

Residues 4–87 (KETAKRLIEL…SKEADIEREE (84 aa)) form the PTS EIIB type-1 domain. C26 serves as the catalytic Phosphocysteine intermediate; for EIIB activity. The region spanning 107–461 (KTLSNIFVPI…KINEDEERKK (355 aa)) is the PTS EIIC type-1 domain. 10 helical membrane passes run 112-132 (IFVP…LLGM), 148-168 (LLDM…GVSA), 178-198 (LGAV…WGLA), 208-228 (FGFD…LLAV), 248-268 (LLVT…IAIG), 289-309 (AGFV…LTGV), 329-349 (LLPI…AVFF), 359-379 (IALP…IFGV), 387-407 (FIAA…THVA), and 430-450 (LIHY…AAFV).

It is found in the cell membrane. The catalysed reaction is N(pros)-phospho-L-histidyl-[protein](out) + sucrose = sucrose 6(G)-phosphate(in) + L-histidyl-[protein]. In terms of biological role, the phosphoenolpyruvate-dependent sugar phosphotransferase system (sugar PTS), a major carbohydrate active transport system, catalyzes the phosphorylation of incoming sugar substrates concomitantly with their translocation across the cell membrane. This system is involved in sucrose transport. This is PTS system sucrose-specific EIIBC component (sacP) from Bacillus subtilis (strain 168).